Consider the following 302-residue polypeptide: uncharacterized protein (302 aa).

2 disordered regions span residues 1 to 167 (MPCR…QSSE) and 180 to 199 (PSLC…QRAS). Over residues 39-54 (EESHAPSRDPRDHQGS) the composition is skewed to basic and acidic residues. 2 stretches are compositionally biased toward polar residues: residues 123-133 (LSTSSCASVSR) and 183-197 (CPSQ…SPQR).

This is an uncharacterized protein from Homo sapiens (Human).